The primary structure comprises 92 residues: Small ribosomal subunit protein uS19 (92 aa).

The protein belongs to the universal ribosomal protein uS19 family.

In terms of biological role, protein S19 forms a complex with S13 that binds strongly to the 16S ribosomal RNA. This Buchnera aphidicola subsp. Acyrthosiphon pisum (strain 5A) protein is Small ribosomal subunit protein uS19.